Consider the following 938-residue polypeptide: Isoleucine--tRNA ligase (938 aa).

The 'HIGH' region signature appears at 58–68 (PYANGNIHIGH). E562 contributes to the L-isoleucyl-5'-AMP binding site. The 'KMSKS' region motif lies at 603-607 (KMSKS). ATP is bound at residue K606. Residues C901, C904, C921, and C924 each coordinate Zn(2+).

Belongs to the class-I aminoacyl-tRNA synthetase family. IleS type 1 subfamily. Monomer. The cofactor is Zn(2+).

The protein localises to the cytoplasm. It carries out the reaction tRNA(Ile) + L-isoleucine + ATP = L-isoleucyl-tRNA(Ile) + AMP + diphosphate. Catalyzes the attachment of isoleucine to tRNA(Ile). As IleRS can inadvertently accommodate and process structurally similar amino acids such as valine, to avoid such errors it has two additional distinct tRNA(Ile)-dependent editing activities. One activity is designated as 'pretransfer' editing and involves the hydrolysis of activated Val-AMP. The other activity is designated 'posttransfer' editing and involves deacylation of mischarged Val-tRNA(Ile). This chain is Isoleucine--tRNA ligase, found in Actinobacillus pleuropneumoniae serotype 5b (strain L20).